Here is a 1360-residue protein sequence, read N- to C-terminus: Activating molecule in BECN1-regulated autophagy protein 1B (1360 aa).

WD repeat units follow at residues 50–89 (DNPRSTFLLAFSPDRNLVASTHVNHNIYITDVKTGKCLHS), 92–132 (GHRR…ESWF), and 134–174 (ESNV…AVVK). Residues 249–258 (RSSGAQANDQ) are compositionally biased toward polar residues. Disordered stretches follow at residues 249–277 (RSSGAQANDQSRPAPEPREPPSIPRFQYP), 315–364 (PTGL…NSAH), 412–490 (GVET…QRNN), 514–573 (ELER…RCRS), 587–616 (WERSGQTSSSSSSQEGPSWPLSVPPFEDPG), 664–688 (PTVSASSEAAEDALNPEVPVDNPDE), and 754–796 (TLSN…MPRN). The span at 319–333 (QPSDSTQPQTQSGPS) shows a compositional bias: low complexity. Positions 350-361 (AFSSVFSGTAGN) are enriched in polar residues. Positions 428–437 (SSSSMDLLSL) are enriched in low complexity. 2 stretches are compositionally biased toward polar residues: residues 443 to 454 (GSSSSPIYTSAT) and 473 to 490 (DGTSSGHHPFYDNTQRNN). Residues 590–607 (SGQTSSSSSSQEGPSWPL) are compositionally biased toward low complexity. Residues 754–768 (TLSNSQADSQSNNPS) show a composition bias toward polar residues. Residues 775–784 (SDGDYEDIEE) are compositionally biased toward acidic residues. Short sequence motifs (TQT motif) lie at residues 1109–1111 (TQT) and 1121–1123 (TQT). 2 disordered regions span residues 1120–1142 (ETQTERELPSASTFQNTHTTSRH) and 1241–1360 (SQTS…LYGR). Polar residues-rich tracts occupy residues 1129–1142 (SASTFQNTHTTSRH) and 1241–1252 (SQTSVRTAQGGN). Residues 1278-1288 (APGPSGSSGAP) are compositionally biased toward low complexity. Residues 1311–1321 (FGDRQPDDVQR) show a composition bias toward basic and acidic residues. Low complexity predominate over residues 1329–1347 (NMSNHSNNNNNDHSNSYSE). A compositionally biased stretch (basic and acidic residues) spans 1348 to 1360 (SRSRDYPDDLYGR).

It belongs to the WD repeat AMBRA1 family. In terms of assembly, component of the DCX(AMBRA1) E3 ubiquitin ligase complex.

It is found in the endoplasmic reticulum. The protein localises to the cytoplasm. Its subcellular location is the cytoskeleton. It localises to the cytoplasmic vesicle. The protein resides in the autophagosome. It is found in the mitochondrion. The protein localises to the cytosol. Its subcellular location is the nucleus. It localises to the cell junction. The protein resides in the focal adhesion. The protein operates within protein modification; protein ubiquitination. Functionally, substrate-recognition component of a DCX (DDB1-CUL4-X-box) E3 ubiquitin-protein ligase complex involved in cell cycle control and autophagy. The DCX(AMBRA1) complex specifically mediates the polyubiquitination of target proteins. Acts as an upstream master regulator of the transition from G1 to S cell phase: ambra1b specifically recognizes and binds phosphorylated cyclin-D (ccnd1, ccnd2 and ccnd3), leading to cyclin-D ubiquitination by the DCX(AMBRA1) complex and subsequent degradation. Acts as a regulator of Cul5-RING (CRL5) E3 ubiquitin-protein ligase complexes by mediating ubiquitination and degradation of Elongin-C (eloc) component of CRL5 complexes. Acts as a key regulator of autophagy by modulating the BECN1-PIK3C3 complex: controls protein turnover during neuronal development, and regulates normal cell survival and proliferation. In normal conditions, ambra1b is tethered to the cytoskeleton via interaction with dyneins light chains. Upon autophagy induction, ambra1b is released from the cytoskeletal docking site to induce autophagosome nucleation by mediating ubiquitination of proteins involved in autophagy. Also acts as an activator of mitophagy. Required for skeletal muscle development. The chain is Activating molecule in BECN1-regulated autophagy protein 1B from Danio rerio (Zebrafish).